A 220-amino-acid polypeptide reads, in one-letter code: Lactate utilization protein C (220 aa).

Belongs to the LutC/YkgG family.

Functionally, is involved in L-lactate degradation and allows cells to grow with lactate as the sole carbon source. The sequence is that of Lactate utilization protein C from Anoxybacillus flavithermus (strain DSM 21510 / WK1).